A 306-amino-acid chain; its full sequence is Ribonuclease Z (306 aa).

Residues histidine 63, histidine 65, aspartate 67, histidine 68, histidine 141, aspartate 211, and histidine 269 each contribute to the Zn(2+) site. Catalysis depends on aspartate 67, which acts as the Proton acceptor.

Belongs to the RNase Z family. As to quaternary structure, homodimer. The cofactor is Zn(2+).

It carries out the reaction Endonucleolytic cleavage of RNA, removing extra 3' nucleotides from tRNA precursor, generating 3' termini of tRNAs. A 3'-hydroxy group is left at the tRNA terminus and a 5'-phosphoryl group is left at the trailer molecule.. Its function is as follows. Zinc phosphodiesterase, which displays some tRNA 3'-processing endonuclease activity. Probably involved in tRNA maturation, by removing a 3'-trailer from precursor tRNA. The sequence is that of Ribonuclease Z from Staphylococcus epidermidis (strain ATCC 35984 / DSM 28319 / BCRC 17069 / CCUG 31568 / BM 3577 / RP62A).